We begin with the raw amino-acid sequence, 274 residues long: Ommochrome-binding protein (274 aa).

The signal sequence occupies residues 1 to 18 (MKLLILTICALHVNQMMA). Asn183 is a glycosylation site (N-linked (GlcNAc...) asparagine).

Monomer. Present in larval hemolymph and synthesized by the fat body.

Binds to an ommochrome, ommatin D which is a yellow chromophore. May be involved in guiding the chromophore through the hemolymph from the epidermis to the gut. The chain is Ommochrome-binding protein from Manduca sexta (Tobacco hawkmoth).